We begin with the raw amino-acid sequence, 93 residues long: uncharacterized protein (93 aa).

Positions 26–73 (NRGTIFRPMTRNSGIVGRRGGPVAPAPFRNNVQKPGTRPPGFKPPSGV) are disordered.

This is an uncharacterized protein from Caenorhabditis elegans.